Here is a 139-residue protein sequence, read N- to C-terminus: Large-conductance mechanosensitive channel (139 aa).

A run of 2 helical transmembrane segments spans residues 9–29 and 79–99; these read AFAV…GAAF and IQTV…VKAI.

Belongs to the MscL family. Homopentamer.

It localises to the cell inner membrane. Channel that opens in response to stretch forces in the membrane lipid bilayer. May participate in the regulation of osmotic pressure changes within the cell. This Pseudomonas putida (strain ATCC 47054 / DSM 6125 / CFBP 8728 / NCIMB 11950 / KT2440) protein is Large-conductance mechanosensitive channel.